We begin with the raw amino-acid sequence, 210 residues long: Cytochrome c oxidase subunit 2 (210 aa).

Topologically, residues 1 to 20 (MAFILSFWMIFLLDSVIVLL) are mitochondrial intermembrane. A helical transmembrane segment spans residues 21-42 (SFVCFVCVWICALLFSTVLLVS). The Mitochondrial matrix portion of the chain corresponds to 43-60 (KLNNIYCTWDFTASKFID). A helical transmembrane segment spans residues 61–86 (VYWFTIGGMFSLGLLLRLCLLLYFGH). The Mitochondrial intermembrane segment spans residues 87–210 (LNFVSFDLCK…GFMPIVICFI (124 aa)). Cu cation is bound by residues His-157, Cys-192, Glu-194, Cys-196, His-200, and Met-203. Glu-194 contributes to the Mg(2+) binding site.

This sequence belongs to the cytochrome c oxidase subunit 2 family. In terms of assembly, component of the cytochrome c oxidase (complex IV, CIV), a multisubunit enzyme composed of a catalytic core of 3 subunits and several supernumerary subunits. The complex exists as a monomer or a dimer and forms supercomplexes (SCs) in the inner mitochondrial membrane with ubiquinol-cytochrome c oxidoreductase (cytochrome b-c1 complex, complex III, CIII). The cofactor is Cu cation.

The protein resides in the mitochondrion inner membrane. The enzyme catalyses 4 Fe(II)-[cytochrome c] + O2 + 8 H(+)(in) = 4 Fe(III)-[cytochrome c] + 2 H2O + 4 H(+)(out). Its function is as follows. Component of the cytochrome c oxidase, the last enzyme in the mitochondrial electron transport chain which drives oxidative phosphorylation. The respiratory chain contains 3 multisubunit complexes succinate dehydrogenase (complex II, CII), ubiquinol-cytochrome c oxidoreductase (cytochrome b-c1 complex, complex III, CIII) and cytochrome c oxidase (complex IV, CIV), that cooperate to transfer electrons derived from NADH and succinate to molecular oxygen, creating an electrochemical gradient over the inner membrane that drives transmembrane transport and the ATP synthase. Cytochrome c oxidase is the component of the respiratory chain that catalyzes the reduction of oxygen to water. Electrons originating from reduced cytochrome c in the intermembrane space (IMS) are transferred via the dinuclear copper A center (CU(A)) of subunit 2 and heme A of subunit 1 to the active site in subunit 1, a binuclear center (BNC) formed by heme A3 and copper B (CU(B)). The BNC reduces molecular oxygen to 2 water molecules using 4 electrons from cytochrome c in the IMS and 4 protons from the mitochondrial matrix. The polypeptide is Cytochrome c oxidase subunit 2 (Leishmania tarentolae (Sauroleishmania tarentolae)).